A 372-amino-acid polypeptide reads, in one-letter code: MRSVIADSRRLVVKVGSSLVTNDGRGLDHAAIGRWAGQIAALRAQGKEVVLVSSGAIAEGMQRLGWTRRPREIDELQAAAAVGQMGLAQVYESRFAEHSIQTAQILLTHADLADRERYLNARSTLLTLLRLGVVPIINENDTVVTDEIKFGDNDTLGALVANLIEGDALVILTDQQGLFTADPRKDPAATLVQQADAGAPELEAMAGGAGSSLGRGGMLTKILAAKRAAHSGANTVIASGREVDVLSRLASGEAIGTQLIARTARMAARKQWMADHLQVRGHVVIDDGAVEKLTEGGKSLLPIGIVGVQGAFARGEVIACLSAAGREVARGLTNYSSAETKLIQRRPSGEIESVLGYMLEPELIHRDNLVLV.

Lys14 lines the ATP pocket. Substrate-binding residues include Ser54, Asp141, and Asn153. 173–174 (TD) serves as a coordination point for ATP. One can recognise a PUA domain in the interval 280 to 358 (RGHVVIDDGA…GEIESVLGYM (79 aa)).

Belongs to the glutamate 5-kinase family.

The protein resides in the cytoplasm. It carries out the reaction L-glutamate + ATP = L-glutamyl 5-phosphate + ADP. Its pathway is amino-acid biosynthesis; L-proline biosynthesis; L-glutamate 5-semialdehyde from L-glutamate: step 1/2. Catalyzes the transfer of a phosphate group to glutamate to form L-glutamate 5-phosphate. This chain is Glutamate 5-kinase, found in Paraburkholderia xenovorans (strain LB400).